A 315-amino-acid polypeptide reads, in one-letter code: Small ribosomal subunit biogenesis GTPase RsgA (315 aa).

Residues 80 to 241 enclose the CP-type G domain; that stretch reads LSKQTHIIAS…IIDTPGIKGF (162 aa). Residues 129–132 and 183–191 each bind GTP; these read NKVD and GHSGTGKST. 4 residues coordinate Zn(2+): Cys265, Cys270, His272, and Cys278.

The protein belongs to the TRAFAC class YlqF/YawG GTPase family. RsgA subfamily. Monomer. Associates with 30S ribosomal subunit, binds 16S rRNA. Zn(2+) serves as cofactor.

The protein resides in the cytoplasm. In terms of biological role, one of several proteins that assist in the late maturation steps of the functional core of the 30S ribosomal subunit. Helps release RbfA from mature subunits. May play a role in the assembly of ribosomal proteins into the subunit. Circularly permuted GTPase that catalyzes slow GTP hydrolysis, GTPase activity is stimulated by the 30S ribosomal subunit. The polypeptide is Small ribosomal subunit biogenesis GTPase RsgA (Christiangramia forsetii (strain DSM 17595 / CGMCC 1.15422 / KT0803) (Gramella forsetii)).